The sequence spans 180 residues: MKYIEIDDELYRYIASNTQQIGESASDILRRLLGLEVTAEAESIPERISEPSMEGVEEAAPVRSAVAEAGVFEELVDDEQLPRQKGAVGRFLYLLDCLYRQHPSAFDGVLAIRGRDRLYFSQSKEALLKASPSANPKQIGASPFWVSANNNTAKKRAILEEVLEILGCQKALAARIAEQV.

The interval 87–88 is interaction with DNA; the sequence is AV.

It belongs to the SeqA family. Homodimer. Polymerizes to form helical filaments.

Its subcellular location is the cytoplasm. Its function is as follows. Negative regulator of replication initiation, which contributes to regulation of DNA replication and ensures that replication initiation occurs exactly once per chromosome per cell cycle. Binds to pairs of hemimethylated GATC sequences in the oriC region, thus preventing assembly of replication proteins and re-initiation at newly replicated origins. Repression is relieved when the region becomes fully methylated. The sequence is that of Negative modulator of initiation of replication from Ferrimonas balearica (strain DSM 9799 / CCM 4581 / KCTC 23876 / PAT).